The primary structure comprises 452 residues: Tripartite motif-containing protein 49C (452 aa).

The RING-type zinc finger occupies 15-56; the sequence is CPLCMNYFIDPVTIDCGHSFCRPCFYLNWQDIPFLVQCSECT. The B box-type zinc finger occupies 88–129; it reads SEEQMCGTHRETKKIFCEVDRSLLCLLCSSSQEHRYHRHRPI. 4 residues coordinate Zn(2+): Cys-93, His-96, Cys-115, and His-121. The B30.2/SPRY domain maps to 269-452; sequence ELSAGPITGL…LRPIFCCIHF (184 aa).

The sequence is that of Tripartite motif-containing protein 49C (TRIM49C) from Homo sapiens (Human).